Here is a 484-residue protein sequence, read N- to C-terminus: Malonate-semialdehyde dehydrogenase 1 (484 aa).

NAD(+)-binding residues include phenylalanine 153, lysine 177, glutamate 180, arginine 181, serine 230, and threonine 252. Catalysis depends on cysteine 285, which acts as the Nucleophile. NAD(+) is bound at residue glutamate 385.

Belongs to the aldehyde dehydrogenase family. IolA subfamily. Homotetramer.

The enzyme catalyses 3-oxopropanoate + NAD(+) + CoA + H2O = hydrogencarbonate + acetyl-CoA + NADH + H(+). The catalysed reaction is 2-methyl-3-oxopropanoate + NAD(+) + CoA + H2O = propanoyl-CoA + hydrogencarbonate + NADH + H(+). It functions in the pathway polyol metabolism; myo-inositol degradation into acetyl-CoA; acetyl-CoA from myo-inositol: step 7/7. Catalyzes the oxidation of malonate semialdehyde (MSA) and methylmalonate semialdehyde (MMSA) into acetyl-CoA and propanoyl-CoA, respectively. Is involved in a myo-inositol catabolic pathway. Bicarbonate, and not CO2, is the end-product of the enzymatic reaction. The sequence is that of Malonate-semialdehyde dehydrogenase 1 from Geobacillus thermodenitrificans (strain NG80-2).